A 513-amino-acid chain; its full sequence is Teichoic acid ribitol-phosphate polymerase TarK (513 aa).

The protein belongs to the CDP-glycerol glycerophosphotransferase family.

It is found in the cell membrane. The catalysed reaction is 4-O-[di(2R)-glycerylphospho]-N-acetyl-beta-D-mannosaminyl-(1-&gt;4)-N-acetyl-alpha-D-glucosaminyl di-trans,octa-cis-undecaprenyl diphosphate + n CDP-L-ribitol = 4-O-[(D-ribitylphospho)(n)-di{(2R)-glycerylphospho}]-N-acetyl-beta-D-mannosaminyl-(1-&gt;4)-N-acetyl-alpha-D-glucosaminyl di-trans,octa-cis-undecaprenyl diphosphate + n CMP + n H(+). The protein operates within cell wall biogenesis; poly(ribitol phosphate) teichoic acid biosynthesis. Functionally, can catalyze the polymerization of the main chain of the major teichoic acid by sequential transfer of ribitol phosphate units from CDP-ribitol to the second glycerol phosphate attached to the disaccharide linkage unit. This Staphylococcus aureus (strain NCTC 8325 / PS 47) protein is Teichoic acid ribitol-phosphate polymerase TarK (tarK).